A 579-amino-acid chain; its full sequence is Probable cytochrome c biosynthesis protein (579 aa).

Belongs to the CcmF/CycK/Ccl1/NrfE/CcsA family.

The protein resides in the mitochondrion. Could be involved in assembly and maturation of cytochromes c. May play a role in guidance of apocytochromes and heme groups for the covalent linkage introduced by the cytochrome-c-heme lyase. The polypeptide is Probable cytochrome c biosynthesis protein (Daucus carota (Wild carrot)).